The following is a 234-amino-acid chain: uncharacterized protein (234 aa).

Transmembrane regions (helical) follow at residues 20–40 (LILL…FKVI) and 176–196 (VMAF…LHFL).

The protein belongs to the CpsC/CapA family.

It localises to the cell membrane. This is an uncharacterized protein from Bacillus subtilis (strain 168).